A 344-amino-acid polypeptide reads, in one-letter code: Dihydroorotate dehydrogenase (quinone) (344 aa).

FMN-binding positions include 61–65 (AGLDK) and T85. Residue K65 participates in substrate binding. 110–114 (NRMGF) is a substrate binding site. Residues N138 and N171 each contribute to the FMN site. Substrate is bound at residue N171. The Nucleophile role is filled by S174. N176 lines the substrate pocket. 2 residues coordinate FMN: K216 and T244. 245 to 246 (NT) is a substrate binding site. FMN is bound by residues G267, G296, and 317–318 (YS).

The protein belongs to the dihydroorotate dehydrogenase family. Type 2 subfamily. As to quaternary structure, monomer. FMN serves as cofactor.

It is found in the cell membrane. The catalysed reaction is (S)-dihydroorotate + a quinone = orotate + a quinol. It functions in the pathway pyrimidine metabolism; UMP biosynthesis via de novo pathway; orotate from (S)-dihydroorotate (quinone route): step 1/1. In terms of biological role, catalyzes the conversion of dihydroorotate to orotate with quinone as electron acceptor. The protein is Dihydroorotate dehydrogenase (quinone) of Psychrobacter sp. (strain PRwf-1).